We begin with the raw amino-acid sequence, 356 residues long: Replication-associated protein (356 aa).

One can recognise a CRESS-DNA virus Rep endonuclease domain in the interval 8-116; it reads RVQAKNYFLT…DGDTAEWGEF (109 aa). An RCR-1 motif is present at residues 15 to 18; the sequence is FLTY. Glutamate 49, histidine 57, and histidine 59 together coordinate a divalent metal cation. An RCR-2 motif is present at residues 57–59; the sequence is HLH. Residue tyrosine 103 is the For DNA cleavage activity of the active site. The short motif at 103–106 is the RCR-3 element; sequence YIDK. An a divalent metal cation-binding site is contributed by aspartate 107. A binding to RBR1 region spans residues 143–153; it reads VQSALNILKEE. Positions 156 to 176 are oligomerization; the sequence is KDYVLQNHNIRSNLERIFAKA. 221–228 contacts ATP; it reads EGDSRTGK.

This sequence belongs to the geminiviridae Rep protein family. Homooligomer. Interacts with the replication enhancer protein (REn). Interacts with host retinoblastoma-related protein 1 (RBR1), and may thereby induce the transcription of host replicative enzymes even if the cell is not dividing anymore. Interacts with host PCNA. Interacts with host SCE1 protein. Mg(2+) serves as cofactor. It depends on Mn(2+) as a cofactor.

It is found in the host nucleus. Essential for the replication of viral ssDNA. The closed circular ssDNA genome is first converted to a superhelical dsDNA. Rep binds a specific region at the genome origin of replication. It introduces an endonucleolytic nick within the conserved sequence 5'-TAATATTAC-3' in the intergenic region of the genome present in all geminiviruses, thereby initiating the rolling circle replication (RCR). Following cleavage, binds covalently to the 5'-phosphate of DNA as a tyrosyl ester. The cleavage gives rise to a free 3'-OH that serves as a primer for the cellular DNA polymerase. The polymerase synthesizes the (+) strand DNA by rolling circle mechanism. After one round of replication, a Rep-catalyzed nucleotidyl transfer reaction releases a circular single-stranded virus genome, thereby terminating the replication. Displays origin-specific DNA cleavage, nucleotidyl transferase, ATPase and helicase activities. This is Replication-associated protein from Abutilon (Upland cotton).